Here is a 442-residue protein sequence, read N- to C-terminus: MSEIGSYHDTIFALSSGRLPSGVAVIRISGPKTRFVYETICQAIPEPRHAALLTFRSRNGDAIDRGLTLFFPAPHSFTGEDCAEFHLHGGKAVVEKMLAVLGELPGCRIAEAGEFTRRAFANGKMDLTIAEGLADLIAAETEGQRRLAMQVASGNQRKLYSEWRQRLINARAFIEAELDFADESDVPGSVSMQVWQQLSALKHEIEHHIASGKRAAMLRDGLHVVIVGAPNAGKSSLLNFLAGRDVAIISEEAGTTRDLLEVKLDLGGIPVYVTDTAGLRETDSVVEKIGIERARARMAEADLVLSLEDMSGPVSVTVEKIEAETWLIGTKADLGGSASGLWKYHISTMTGSGLEQLLDALQAFAEAKIGQIEDAVPTRQRHINLLRATIEEIEKAIEGDDLPLELRAENMRLASQFLGRITGDVDVEEILDVIFSQFCIGK.

3 residues coordinate (6S)-5-formyl-5,6,7,8-tetrahydrofolate: Arg27, Glu84, and Lys124. The 146-residue stretch at 221–366 (GLHVVIVGAP…LLDALQAFAE (146 aa)) folds into the TrmE-type G domain. GTP contacts are provided by residues 231–236 (NAGKSS), 250–256 (SEEAGTT), and 275–278 (DTAG). Residues Ser235 and Thr256 each coordinate Mg(2+). Position 442 (Lys442) interacts with (6S)-5-formyl-5,6,7,8-tetrahydrofolate.

This sequence belongs to the TRAFAC class TrmE-Era-EngA-EngB-Septin-like GTPase superfamily. TrmE GTPase family. As to quaternary structure, homodimer. Heterotetramer of two MnmE and two MnmG subunits. It depends on K(+) as a cofactor.

It localises to the cytoplasm. In terms of biological role, exhibits a very high intrinsic GTPase hydrolysis rate. Involved in the addition of a carboxymethylaminomethyl (cmnm) group at the wobble position (U34) of certain tRNAs, forming tRNA-cmnm(5)s(2)U34. The protein is tRNA modification GTPase MnmE of Brucella melitensis biotype 1 (strain ATCC 23456 / CCUG 17765 / NCTC 10094 / 16M).